We begin with the raw amino-acid sequence, 202 residues long: Ribonuclease HII (202 aa).

An RNase H type-2 domain is found at 15–202 (QGVAGVDEAG…APIKAFGISA (188 aa)). D21, E22, and D113 together coordinate a divalent metal cation.

Belongs to the RNase HII family. The cofactor is Mn(2+). It depends on Mg(2+) as a cofactor.

The protein resides in the cytoplasm. It catalyses the reaction Endonucleolytic cleavage to 5'-phosphomonoester.. Functionally, endonuclease that specifically degrades the RNA of RNA-DNA hybrids. The chain is Ribonuclease HII from Bordetella avium (strain 197N).